Here is a 1085-residue protein sequence, read N- to C-terminus: Error-prone DNA polymerase 2 (1085 aa).

The segment at 1040 to 1066 is disordered; it reads AGRGDEFAHGGGGPDSRDRQKPVVPRD.

Belongs to the DNA polymerase type-C family. DnaE2 subfamily.

It localises to the cytoplasm. The enzyme catalyses DNA(n) + a 2'-deoxyribonucleoside 5'-triphosphate = DNA(n+1) + diphosphate. Its function is as follows. DNA polymerase involved in damage-induced mutagenesis and translesion synthesis (TLS). It is not the major replicative DNA polymerase. The polypeptide is Error-prone DNA polymerase 2 (Agrobacterium fabrum (strain C58 / ATCC 33970) (Agrobacterium tumefaciens (strain C58))).